The chain runs to 677 residues: Galactocerebrosidase (677 aa).

An N-terminal signal peptide occupies residues 1–33; the sequence is MGTVPAGSRRAPGCGEGMFILCLALLLAPGAPA. The substrate site is built by Thr101, Trp143, and Asn189. The active-site Proton donor/acceptor is the Glu190. Glu265 (nucleophile) is an active-site residue. A disulfide bond links Cys278 and Cys385. Residues Asn291, Asn370, and Asn381 are each glycosylated (N-linked (GlcNAc...) asparagine). Substrate is bound at residue Arg387. Residues Asn394, Asn399, Asn424, Asn441, Asn509, Asn549, and Asn630 are each glycosylated (N-linked (GlcNAc...) asparagine).

The protein belongs to the glycosyl hydrolase 59 family.

Its subcellular location is the lysosome. The catalysed reaction is a beta-D-galactosyl-(1&lt;-&gt;1')-N-acylsphing-4-enine + H2O = an N-acylsphing-4-enine + D-galactose. The enzyme catalyses beta-D-galactosyl-(1&lt;-&gt;1)-sphing-4-enine + H2O = sphing-4-enine + D-galactose. It catalyses the reaction a D-galactosylceramide + H2O = an N-acyl-sphingoid base + D-galactose. Functionally, hydrolyzes the galactose ester bonds of glycolipids such as galactosylceramide and galactosylsphingosine. The polypeptide is Galactocerebrosidase (Xenopus laevis (African clawed frog)).